The following is a 40-amino-acid chain: Conotoxin Bt14.16 (40 aa).

A propeptide spanning residues 1 to 18 (SDGRDAAVIYTESDVIAR) is cleaved from the precursor. 2 disulfides stabilise this stretch: Cys-21/Cys-36 and Cys-24/Cys-29.

This sequence belongs to the conotoxin A superfamily. In terms of tissue distribution, expressed by the venom duct.

The protein resides in the secreted. Probable neurotoxin with unknown target. Possibly targets ion channels. In Conus betulinus (Beech cone), this protein is Conotoxin Bt14.16.